The primary structure comprises 151 residues: Deoxyuridine 5'-triphosphate nucleotidohydrolase (151 aa).

Residues 70–72, asparagine 83, 87–89, and methionine 97 contribute to the substrate site; these read RSG and LID.

This sequence belongs to the dUTPase family. Requires Mg(2+) as cofactor.

It catalyses the reaction dUTP + H2O = dUMP + diphosphate + H(+). It functions in the pathway pyrimidine metabolism; dUMP biosynthesis; dUMP from dCTP (dUTP route): step 2/2. In terms of biological role, this enzyme is involved in nucleotide metabolism: it produces dUMP, the immediate precursor of thymidine nucleotides and it decreases the intracellular concentration of dUTP so that uracil cannot be incorporated into DNA. This is Deoxyuridine 5'-triphosphate nucleotidohydrolase from Stutzerimonas stutzeri (strain A1501) (Pseudomonas stutzeri).